The following is a 159-amino-acid chain: Afifavidin (159 aa).

The first 23 residues, 1-23, serve as a signal peptide directing secretion; that stretch reads MRRLASLAVALPLLAVVASPALA. The 116-residue stretch at 36 to 151 folds into the Avidin-like domain; the sequence is GVPAVSSSWV…GSDTFTLVNK (116 aa). Asn46, Ser50, Tyr66, Asn68, and Gly74 together coordinate biotin. The cysteines at positions 75 and 104 are disulfide-linked. Biotin contacts are provided by Ser106, Thr108, and Asp144.

This sequence belongs to the avidin/streptavidin family. In terms of assembly, exhibits a dynamic oligomeric assembly: the apo form self-assembles mostly into toroid-shaped homooctamers, with a small fraction of homodimers, yet upon biotin binding the intact afifavidin consists solely of the dimer.

The protein resides in the secreted. In terms of biological role, the exact role played by afifavidin is still obscure. Forms a strong non-covalent complex with biotin and 2-iminobiotin. The chain is Afifavidin from Afifella pfennigii (Rhodobium pfennigii).